The primary structure comprises 274 residues: Protein FAM210A (274 aa).

Positions K51–T66 are enriched in polar residues. The disordered stretch occupies residues K51–S91. Positions E81–S91 are enriched in low complexity. Residues D105 to K217 form the DUF1279 domain. Residues V124 to A144 form a helical membrane-spanning segment. A coiled-coil region spans residues Q221–M274.

This sequence belongs to the FAM210 family.

It is found in the membrane. The protein localises to the mitochondrion. It localises to the cytoplasm. Functionally, may play a role in the structure and strength of both muscle and bone. The chain is Protein FAM210A (fam210a) from Xenopus tropicalis (Western clawed frog).